The following is a 329-amino-acid chain: MKPLMLQGHQRAITQIKYNREGDLLFSAAKDSKPNVWWSLNGERLGTFNGHGGVIWCLDVDWQSINLITGGGDSSCRLWDLETGKNIATLKSNSSVRTCNFSYSAYQAAYTTDKAMGHPCEVFVIDTRTIDETVSGQAPILKWEITDSKVTSMIWGSLDETIITGHEAGDLIQWDLRTGKKIHSVKEHTHQITDMQLSRDGTMFVTASKDHTAKLFDTNSLELLKEYKTERPVNSAALSPILDHVVLGGGQDAMEVTTTSTRQGKFDARFFHLVFEEEFGRVKGHFGPINSLAFHPDGKSYASGGEDGYVRVHNFDQSYFDYTFDYNRE.

5 WD repeats span residues 8 to 47, 50 to 89, 145 to 184, 187 to 226, and 284 to 323; these read GHQRAITQIKYNREGDLLFSAAKDSKPNVWWSLNGERLGT, GHGGVIWCLDVDWQSINLITGGGDSSCRLWDLETGKNIAT, ITDSKVTSMIWGSLDETIITGHEAGDLIQWDLRTGKKIHS, EHTHQITDMQLSRDGTMFVTASKDHTAKLFDTNSLELLKE, and GHFGPINSLAFHPDGKSYASGGEDGYVRVHNFDQSYFDYT.

This sequence belongs to the eIF-3 subunit I family. In terms of assembly, component of the eukaryotic translation initiation factor 3 (eIF-3) complex.

It is found in the cytoplasm. Component of the eukaryotic translation initiation factor 3 (eIF-3) complex, which is involved in protein synthesis of a specialized repertoire of mRNAs and, together with other initiation factors, stimulates binding of mRNA and methionyl-tRNAi to the 40S ribosome. The eIF-3 complex specifically targets and initiates translation of a subset of mRNAs involved in cell proliferation. The sequence is that of Eukaryotic translation initiation factor 3 subunit I from Bombyx mori (Silk moth).